A 536-amino-acid polypeptide reads, in one-letter code: MIQKCIALSLFLFSALPEDNIVRALSLSPNNPKSNVVMVMSDAFDGRLTLLPENGLVSLPYINFMKKHGALFLNAYTNSPICCPSRAAMWSGLFPHLTESWNNYKCLDSDYPTWMDIVEKNGYVTQRLGKQDYKSGSHSLSNRVEAWTRDVPFLLRQEGRPCANLTGNKTQTRVMALDWKNVDTATAWIQKAAQNHSQPFFLYLGLNLPHPYPSETMGENFGSSTFLTSPYWLQKVPYKNVTIPKWKPLQSMHPVDYYSSYTKNCTAPFTEQEIRDIRAYYYAMCAEADGLLGEIISALNDTGLLGRTYVVFTSDHGELAMEHRQFYKMSMYEGSSHIPLLIMGPRISPGQQISTVVSLVDLYPTMLEIAGVQIPQNISGYSLMPLLSASSNKNVSPSISVHPNWAMSEFHGSDANASTYMLWDNYWKYVAYADGDSVAPQLFDLSSDPDELTNVAGQVPEKVQEMDKKLRSIVDYPKVSASVHVYNKQQFALWKASVGANYTNVIANLRWHADWNKRPRAYEMAIEKWIKSTRQH.

A signal peptide spans 1–24 (MIQKCIALSLFLFSALPEDNIVRA). Ca(2+) is bound by residues D42 and C82. The active-site Nucleophile is C82. At C82 the chain carries 3-oxoalanine (Cys). Substrate is bound at residue K130. N-linked (GlcNAc...) asparagine glycosylation is present at N195. H253 is a substrate binding site. N-linked (GlcNAc...) asparagine glycosylation occurs at N264. Ca(2+)-binding residues include D315 and H316. N-linked (GlcNAc...) asparagine glycans are attached at residues N377, N416, and N501.

The protein belongs to the sulfatase family. Ca(2+) is required as a cofactor. The conversion to 3-oxoalanine (also known as C-formylglycine, FGly), of a serine or cysteine residue in prokaryotes and of a cysteine residue in eukaryotes, is critical for catalytic activity.

It is found in the secreted. The protein localises to the lysosome. It carries out the reaction an aryl sulfate + H2O = a phenol + sulfate + H(+). The catalysed reaction is Hydrolysis of the 2-sulfate groups of the 2-O-sulfo-D-glucuronate residues of chondroitin sulfate, heparin and heparitin sulfate.. In terms of biological role, catalyzes the hydrolysis of pseudosubstrates such as p-nitrocatechol sulfate and p-nitrophenyl sulfate. Catalyzes the hydrolysis of the 2-sulfate groups of the 2-O-sulfo-D-glucuronate residues of chondroitin sulfate, heparin and heparitin sulfate. Acts selectively on 2-sulfoglucuronate and lacks activity against 2-sulfoiduronate. This chain is Arylsulfatase K (arsk), found in Xenopus laevis (African clawed frog).